The sequence spans 216 residues: Uracil phosphoribosyltransferase (216 aa).

Residues R85, R110, and 135-143 (DPMVATGYS) contribute to the 5-phospho-alpha-D-ribose 1-diphosphate site. Residues I200 and 205–207 (GDA) each bind uracil. D206 lines the 5-phospho-alpha-D-ribose 1-diphosphate pocket.

The protein belongs to the UPRTase family. Mg(2+) serves as cofactor.

It catalyses the reaction UMP + diphosphate = 5-phospho-alpha-D-ribose 1-diphosphate + uracil. It functions in the pathway pyrimidine metabolism; UMP biosynthesis via salvage pathway; UMP from uracil: step 1/1. Allosterically activated by GTP. Its function is as follows. Catalyzes the conversion of uracil and 5-phospho-alpha-D-ribose 1-diphosphate (PRPP) to UMP and diphosphate. The sequence is that of Uracil phosphoribosyltransferase from Paraburkholderia phymatum (strain DSM 17167 / CIP 108236 / LMG 21445 / STM815) (Burkholderia phymatum).